The sequence spans 247 residues: 6-carboxyhexanoate--CoA ligase (247 aa).

This sequence belongs to the BioW family. Homodimer. Mg(2+) serves as cofactor.

It catalyses the reaction heptanedioate + ATP + CoA = 6-carboxyhexanoyl-CoA + AMP + diphosphate. It participates in metabolic intermediate metabolism; pimeloyl-CoA biosynthesis; pimeloyl-CoA from pimelate: step 1/1. Catalyzes the transformation of pimelate into pimeloyl-CoA with concomitant hydrolysis of ATP to AMP. This Corynebacterium diphtheriae (strain ATCC 700971 / NCTC 13129 / Biotype gravis) protein is 6-carboxyhexanoate--CoA ligase.